A 204-amino-acid polypeptide reads, in one-letter code: Per os infectivity factor 3 (204 aa).

As to quaternary structure, forms the PIF complex together with PIF1 and PIF2. The complex also interacts with per os infectivity factor PIF0.

Its function is as follows. Per os factor that plays a role in the initiation of host midgut infection. Unlike PIF1 and PIF2, PIF3 is not involved in specific binding of occluded virions (ODV) to the host midgut target cells. The polypeptide is Per os infectivity factor 3 (AC115) (Lepidoptera (butterflies and moths)).